We begin with the raw amino-acid sequence, 872 residues long: Paramyosin (872 aa).

The segment at 1 to 31 is nonhelical region; it reads MSLYRSPSAALLKSPSQAAFGAPFGSMSVAD. Residues 32-851 are a coiled coil; the sequence is LGSLTRLEDK…ESSLHLIRAK (820 aa). The segment at 294–376 is interaction with unc-89; sequence EITQWKSKFD…ALLERAREQL (83 aa). Residues 856-866 are nonhelical region; that stretch reads VVTGKSSSKIF.

Belongs to the paramyosin family. Homodimer. May interact with unc-89 (via SH3 domain). Phosphorylated on serine residues in the N-terminal non-helical region. Expressed in body wall muscles of larvae and adults (at protein level). Expressed in gonadal myoepithelial sheath cells (at protein level).

It localises to the cytoplasm. It is found in the myofibril. The protein resides in the sarcomere. Its subcellular location is the a band. Its function is as follows. Structural component of the muscle thick filaments which is involved in assembly and organization of sarcomere myofilaments. Involved in ovulation. Plays a role in the formation of muscle connections, also called muscle arm extensions, between the body wall and the motor axons in the dorsal and ventral cord. The sequence is that of Paramyosin (unc-15) from Caenorhabditis elegans.